The sequence spans 225 residues: Peptidyl-tRNA hydrolase (225 aa).

A tRNA-binding site is contributed by Tyr-14. His-19 functions as the Proton acceptor in the catalytic mechanism. Residues Phe-64, Asn-66, and Asn-112 each coordinate tRNA. Residues Ala-184–Arg-225 form a disordered region. A compositionally biased stretch (low complexity) spans Ala-198–Ala-210.

This sequence belongs to the PTH family. As to quaternary structure, monomer.

It localises to the cytoplasm. It catalyses the reaction an N-acyl-L-alpha-aminoacyl-tRNA + H2O = an N-acyl-L-amino acid + a tRNA + H(+). Its function is as follows. Hydrolyzes ribosome-free peptidyl-tRNAs (with 1 or more amino acids incorporated), which drop off the ribosome during protein synthesis, or as a result of ribosome stalling. Functionally, catalyzes the release of premature peptidyl moieties from peptidyl-tRNA molecules trapped in stalled 50S ribosomal subunits, and thus maintains levels of free tRNAs and 50S ribosomes. The protein is Peptidyl-tRNA hydrolase of Cereibacter sphaeroides (strain KD131 / KCTC 12085) (Rhodobacter sphaeroides).